A 461-amino-acid chain; its full sequence is ATP synthase subunit beta (461 aa).

149 to 156 serves as a coordination point for ATP; that stretch reads GGAGVGKT.

Belongs to the ATPase alpha/beta chains family. F-type ATPases have 2 components, CF(1) - the catalytic core - and CF(0) - the membrane proton channel. CF(1) has five subunits: alpha(3), beta(3), gamma(1), delta(1), epsilon(1). CF(0) has three main subunits: a(1), b(2) and c(9-12). The alpha and beta chains form an alternating ring which encloses part of the gamma chain. CF(1) is attached to CF(0) by a central stalk formed by the gamma and epsilon chains, while a peripheral stalk is formed by the delta and b chains.

The protein resides in the cell membrane. The catalysed reaction is ATP + H2O + 4 H(+)(in) = ADP + phosphate + 5 H(+)(out). Functionally, produces ATP from ADP in the presence of a proton gradient across the membrane. The catalytic sites are hosted primarily by the beta subunits. The sequence is that of ATP synthase subunit beta from Caldanaerobacter subterraneus subsp. tengcongensis (strain DSM 15242 / JCM 11007 / NBRC 100824 / MB4) (Thermoanaerobacter tengcongensis).